We begin with the raw amino-acid sequence, 343 residues long: Putative ALA-interacting subunit 2 (343 aa).

A helical transmembrane segment spans residues 43–63; sequence PISVITVFMLMGFVFIPIGLI. N-linked (GlcNAc...) asparagine glycosylation is found at asparagine 103, asparagine 178, asparagine 191, and asparagine 218. A helical transmembrane segment spans residues 301 to 321; it reads FLGITYLVVGSSSIVISIIFM.

The protein belongs to the CDC50/LEM3 family. In terms of tissue distribution, expressed in roots, leaves, stems, flowers and siliques.

It localises to the membrane. The sequence is that of Putative ALA-interacting subunit 2 (ALIS2) from Arabidopsis thaliana (Mouse-ear cress).